Here is a 176-residue protein sequence, read N- to C-terminus: Co-chaperone protein HscB homolog (176 aa).

The J domain occupies 7–79 (THFSLFGLPE…LKRATYLLHL (73 aa)).

It belongs to the HscB family. In terms of assembly, interacts with HscA and stimulates its ATPase activity.

In terms of biological role, co-chaperone involved in the maturation of iron-sulfur cluster-containing proteins. Seems to help targeting proteins to be folded toward HscA. The sequence is that of Co-chaperone protein HscB homolog from Ralstonia nicotianae (strain ATCC BAA-1114 / GMI1000) (Ralstonia solanacearum).